A 96-amino-acid chain; its full sequence is Cytochrome c2 iso-2 (96 aa).

Residues Cys10, Cys13, His14, and Met75 each coordinate heme c.

Belongs to the cytochrome c family. Binds 1 heme c group covalently per subunit.

In terms of biological role, cytochrome c2 is found mainly in purple, non-sulfur, photosynthetic bacteria where it functions as the electron donor to the oxidized bacteriochlorophyll in the photophosphorylation pathway. However, it may also have a role in the respiratory chain and is found in some non-photosynthetic bacteria. This Magnetospirillum fulvum (Rhodospirillum fulvum) protein is Cytochrome c2 iso-2.